The chain runs to 344 residues: Protein POLAR LOCALIZATION DURING ASYMMETRIC DIVISION AND REDISTRIBUTION (344 aa).

Phosphothreonine; by ASK7 is present on Thr-19. Ser-79 carries the post-translational modification Phosphoserine; by ASK7. A phosphothreonine; by ASK7 mark is found at Thr-84 and Thr-86. Phosphoserine; by ASK7 is present on residues Ser-91 and Ser-94. 3 positions are modified to phosphothreonine; by ASK7: Thr-193, Thr-217, and Thr-233. Ser-235 carries the phosphoserine; by ASK7 modification. The stretch at 262–297 forms a coiled coil; that stretch reads LETRQQEELVKLETALNRVERRLQEKETEVSWWKDA. Ser-308, Ser-309, Ser-320, Ser-321, and Ser-336 each carry phosphoserine; by ASK7.

As to quaternary structure, component of a complex made of POLAR, BASL, ASK7/BIN2 and ASK3/SK12. Interacts with BASL, ASK7/BIN2 and ASK3/SK12. Phosphorylation by ASK7/BIN2 is increases turnover. In terms of tissue distribution, expressed in stomatal lineage cells with asymmetric division potential.

It localises to the cytoplasm. The protein localises to the cell cortex. Functionally, regulates asymmetric cell division (ACD), especially in stomatal-lineage cells. Acts as a stomatal lineage scaffold which regulates subcellular localization and transient polarization of kinases (e.g. ASK7/BIN2 and ASK3/SK12) involved in ACD in a BASL-dependent manner. Promotes the differentiation of both pavement cells and stomata. The chain is Protein POLAR LOCALIZATION DURING ASYMMETRIC DIVISION AND REDISTRIBUTION from Arabidopsis thaliana (Mouse-ear cress).